Consider the following 96-residue polypeptide: UPF0251 protein Ssed_3913 (96 aa).

It belongs to the UPF0251 family.

The protein is UPF0251 protein Ssed_3913 of Shewanella sediminis (strain HAW-EB3).